Reading from the N-terminus, the 447-residue chain is Phosphoglucosamine mutase (447 aa).

The active-site Phosphoserine intermediate is the Ser103. 4 residues coordinate Mg(2+): Ser103, Asp242, Asp244, and Asp246. Ser103 bears the Phosphoserine mark.

Belongs to the phosphohexose mutase family. Mg(2+) serves as cofactor. Activated by phosphorylation.

The enzyme catalyses alpha-D-glucosamine 1-phosphate = D-glucosamine 6-phosphate. Its function is as follows. Catalyzes the conversion of glucosamine-6-phosphate to glucosamine-1-phosphate. This chain is Phosphoglucosamine mutase, found in Marinobacter nauticus (strain ATCC 700491 / DSM 11845 / VT8) (Marinobacter aquaeolei).